Here is a 382-residue protein sequence, read N- to C-terminus: D-galactonate dehydratase (382 aa).

Residue Asp183 participates in Mg(2+) binding. The Proton donor role is filled by His185. Mg(2+) contacts are provided by Glu209 and Glu235. His285 functions as the Proton acceptor in the catalytic mechanism.

The protein belongs to the mandelate racemase/muconate lactonizing enzyme family. GalD subfamily. The cofactor is Mg(2+).

It catalyses the reaction D-galactonate = 2-dehydro-3-deoxy-D-galactonate + H2O. The protein operates within carbohydrate acid metabolism; D-galactonate degradation; D-glyceraldehyde 3-phosphate and pyruvate from D-galactonate: step 1/3. Functionally, catalyzes the dehydration of D-galactonate to 2-keto-3-deoxy-D-galactonate. This chain is D-galactonate dehydratase, found in Salmonella paratyphi A (strain AKU_12601).